A 103-amino-acid chain; its full sequence is Co-chaperonin GroES (103 aa).

This sequence belongs to the GroES chaperonin family. Heptamer of 7 subunits arranged in a ring. Interacts with the chaperonin GroEL.

It is found in the cytoplasm. Its function is as follows. Together with the chaperonin GroEL, plays an essential role in assisting protein folding. The GroEL-GroES system forms a nano-cage that allows encapsulation of the non-native substrate proteins and provides a physical environment optimized to promote and accelerate protein folding. GroES binds to the apical surface of the GroEL ring, thereby capping the opening of the GroEL channel. This Rippkaea orientalis (strain PCC 8801 / RF-1) (Cyanothece sp. (strain PCC 8801)) protein is Co-chaperonin GroES.